A 286-amino-acid polypeptide reads, in one-letter code: 4-diphosphocytidyl-2-C-methyl-D-erythritol kinase (286 aa).

Residue Lys-11 is part of the active site. An ATP-binding site is contributed by 93–103; sequence PFGAGLGGGSS. The active site involves Asp-135.

Belongs to the GHMP kinase family. IspE subfamily.

The catalysed reaction is 4-CDP-2-C-methyl-D-erythritol + ATP = 4-CDP-2-C-methyl-D-erythritol 2-phosphate + ADP + H(+). It participates in isoprenoid biosynthesis; isopentenyl diphosphate biosynthesis via DXP pathway; isopentenyl diphosphate from 1-deoxy-D-xylulose 5-phosphate: step 3/6. Functionally, catalyzes the phosphorylation of the position 2 hydroxy group of 4-diphosphocytidyl-2C-methyl-D-erythritol. In Chlorobaculum parvum (strain DSM 263 / NCIMB 8327) (Chlorobium vibrioforme subsp. thiosulfatophilum), this protein is 4-diphosphocytidyl-2-C-methyl-D-erythritol kinase.